The chain runs to 4007 residues: PKS-NRPS hybrid synthetase psoA (4007 aa).

A Ketosynthase family 3 (KS3) domain is found at 8–444; sequence KEPIAIIGTG…GTNCHAIVES (437 aa). Catalysis depends on for beta-ketoacyl synthase activity residues Cys-182, His-321, and His-364. A malonyl-CoA:ACP transacylase (MAT) domain region spans residues 575 to 897; sequence VFTGQGAQWA…VLDRKADDIL (323 aa). The tract at residues 969–1105 is N-terminal hotdog fold; sequence HPLLGSRTPD…GHIRITLAAE (137 aa). Positions 969–1147 are dehydratase (DH) domain; that stretch reads HPLLGSRTPD…LSYSGPFRAM (179 aa). The 308-residue stretch at 969-1276 folds into the PKS/mFAS DH domain; sequence HPLLGSRTPD…MSSFLPASEK (308 aa). The Proton acceptor; for dehydratase activity role is filled by His-1001. The tract at residues 1120-1276 is C-terminal hotdog fold; that stretch reads DLLPTSVDRF…MSSFLPASEK (157 aa). The Proton donor; for dehydratase activity role is filled by Asp-1179. Residues 2131 to 2305 form a ketoreductase (KR) domain region; that stretch reads TYLLVGLTGH…PASVIDIGMV (175 aa). Positions 2418–2495 constitute a Carrier 1 domain; that stretch reads EARKVMENAL…QICDEVVASL (78 aa). Ser-2455 carries the post-translational modification O-(pantetheine 4'-phosphoryl)serine. A disordered region spans residues 2513-2550; it reads PAHKLRPWDKPSADTKRTDSIAPVPRSQIAANGPNGLP. Over residues 2518–2531 the composition is skewed to basic and acidic residues; it reads RPWDKPSADTKRTD. The interval 2589-2885 is condensation (C) domain; it reads QPLSLGQSRL…LETIPLWFKV (297 aa). The adenylation (A) domain stretch occupies residues 3076–3478; sequence TYVQLAERAN…LGDVARALVQ (403 aa). Residues 3576 to 3652 enclose the Carrier 2 domain; it reads TPTEARLRDV…LLAARLDGTS (77 aa). O-(pantetheine 4'-phosphoryl)serine is present on Ser-3612. The interval 3696 to 3920 is reductase (R) domain; it reads LTGATGFLGG…INVETVSNNI (225 aa).

This sequence in the C-terminal section; belongs to the NRP synthetase family.

Its pathway is secondary metabolite biosynthesis. Its function is as follows. PKS-NRPS hybrid synthetase; part of the gene cluster that mediates the biosynthesis of pseurotin A, a competitive inhibitor of chitin synthase and an inducer of nerve-cell proliferation. The PKS-NRPS hybrid synthetase psoA is responsible for the biosynthesis of azaspirene, one of the first intermediates having the 1-oxa-7-azaspiro[4,4]-non-2-ene-4,6-dione core of pseurotin, via condensation of one acetyl-CoA, 4 malonyl-CoA, and a L-phenylalanine molecule. The dual-functional monooxygenase/methyltransferase psoF seems to be involved in the addition of the C3 methyl group onto the pseurotin scaffold. Azaspirene is then converted to synerazol through 4 steps including oxidation of C17 by the cytochrome P450 monooxygenase psoD, O-methylation of the hydroxy group of C8 by the methyltransferase psoC, and the trans-to-cis isomerization of the C13 olefin by the glutathione S-transferase psoE. The fourth step of synerazol production is performed by the dual-functional monooxygenase/methyltransferase psoF which seems to catalyze the epoxidation of the intermediate deepoxy-synerazol. Synerazol can be attacked by a water molecule nonenzymatically at two different positions to yield two diol products, pseurotin A and pseurotin D. The sequence is that of PKS-NRPS hybrid synthetase psoA from Aspergillus fumigatus (strain ATCC MYA-4609 / CBS 101355 / FGSC A1100 / Af293) (Neosartorya fumigata).